Here is a 172-residue protein sequence, read N- to C-terminus: Large ribosomal subunit protein uL10 (172 aa).

Belongs to the universal ribosomal protein uL10 family. In terms of assembly, part of the ribosomal stalk of the 50S ribosomal subunit. The N-terminus interacts with L11 and the large rRNA to form the base of the stalk. The C-terminus forms an elongated spine to which L12 dimers bind in a sequential fashion forming a multimeric L10(L12)X complex.

In terms of biological role, forms part of the ribosomal stalk, playing a central role in the interaction of the ribosome with GTP-bound translation factors. In Rhodopseudomonas palustris (strain TIE-1), this protein is Large ribosomal subunit protein uL10.